The following is a 755-amino-acid chain: MKFNQFSYIPVSPETAYQELRSLGFEVSLDASAKANFESFVRKYFLFFEDTDLALKNWIADPETDLLSFFQSDRPLTAEVFGLVALQLLGFVPNVDFTDSVAFLEKMAFPIAFDGSLNNLHQLLATRTQSGNTLIDQLVAQDLIPISNDYVFFNGKSLATFDTNQLHREVVYVETPVDTDKDGLLDLVKVTILRPNVDFPVPAMMTASPYQQGTNEPSSDKLTHKMEGDLLVKPAGKISLSRPEIKAPEADLTPINPVTKAEERFAHTDTYTLNDYMLARGVASIYVSGVGTFNSEGFMTSGDYQQVLAYKAVIDWLNGRARAFTSRSRQHTITADWASGKVTTTGLSYLGTMSNALATTGVDGLEMVIAEAGISSWYDYYRENGLLVSPGGYPGEDLDTLTEFTYSRALLAGEYLRHQKDYEAYLNELSTAIDRKHGDYNQFWHDRNYVQFADRVKATVVFTHGSQDWNVKPINVYQMFRALPKSLEKHLFFHNGAHVYMNAWQSIDFRESMNALICQKLLGLDNGYTLPTVIWQNNQSEQTWEVLDNFGHDNGKHIQLGKSEASIANHYEEEIFAKYGKAYQSFKDDLFMDKANAITLDFELDQDIQINGRVHLELRVKSSTNRGLISAQVLEMGDKKYLAPIPELKRMSLDNGRLFKEEALRELPFKQAKYRVITKGHLNLQNRKDLLSIENVTPNEWMTIGLDLQPTIYKPNKGDKLRLVLYTTDFEHTIRDNSDYEVTVDLSQSKMTLPY.

Active-site charge relay system residues include serine 348, aspartate 468, and histidine 498.

The protein belongs to the peptidase S15 family. Homodimer.

The protein localises to the cytoplasm. It catalyses the reaction Hydrolyzes Xaa-Pro-|- bonds to release unblocked, N-terminal dipeptides from substrates including Ala-Pro-|-p-nitroanilide and (sequentially) Tyr-Pro-|-Phe-Pro-|-Gly-Pro-|-Ile.. Removes N-terminal dipeptides sequentially from polypeptides having unsubstituted N-termini provided that the penultimate residue is proline. This Streptococcus thermophilus protein is Xaa-Pro dipeptidyl-peptidase.